Reading from the N-terminus, the 256-residue chain is Hydroxyacylglutathione hydrolase (256 aa).

Zn(2+) contacts are provided by His-57, His-59, Asp-61, His-62, His-115, Asp-134, and His-172.

It belongs to the metallo-beta-lactamase superfamily. Glyoxalase II family. As to quaternary structure, monomer. Requires Zn(2+) as cofactor.

It carries out the reaction an S-(2-hydroxyacyl)glutathione + H2O = a 2-hydroxy carboxylate + glutathione + H(+). It functions in the pathway secondary metabolite metabolism; methylglyoxal degradation; (R)-lactate from methylglyoxal: step 2/2. Thiolesterase that catalyzes the hydrolysis of S-D-lactoyl-glutathione to form glutathione and D-lactic acid. This Jannaschia sp. (strain CCS1) protein is Hydroxyacylglutathione hydrolase.